We begin with the raw amino-acid sequence, 352 residues long: Ion-translocating oxidoreductase complex subunit D (352 aa).

The next 4 membrane-spanning stretches (helical) occupy residues 20–40 (IMLLVLLAAVPGIAAQLWFFG), 42–62 (GTLVQILLASVSALLAEALVL), 89–109 (IPPLAPWWMVVLGTVFAVIIA), and 123–143 (PAMIGYVVLLISFPVQMTSWL). At Thr-187 the chain carries FMN phosphoryl threonine. A run of 5 helical transmembrane segments spans residues 214-234 (ILAGAGWQWVNLAWLAGGVWL), 242-262 (WHIPLSFLVTLALCATLGWLF), 267-287 (LASPQIHLLSGATMLGAFFIL), 301-321 (LIFGALAGLLVWLIRSFGGYP), and 322-342 (DGVAFAVLLANITVPLIDYYT).

This sequence belongs to the NqrB/RnfD family. The complex is composed of six subunits: RsxA, RsxB, RsxC, RsxD, RsxE and RsxG. Requires FMN as cofactor.

It localises to the cell inner membrane. Its function is as follows. Part of a membrane-bound complex that couples electron transfer with translocation of ions across the membrane. Required to maintain the reduced state of SoxR. In Escherichia coli O17:K52:H18 (strain UMN026 / ExPEC), this protein is Ion-translocating oxidoreductase complex subunit D.